The following is a 233-amino-acid chain: Orotidine 5'-phosphate decarboxylase (233 aa).

Residues Asp10, Lys32, 59 to 68, Thr119, Arg180, Gln189, Gly209, and Arg210 contribute to the substrate site; that span reads DLKFHDIPNT. Lys61 acts as the Proton donor in catalysis.

Belongs to the OMP decarboxylase family. Type 1 subfamily. In terms of assembly, homodimer.

The enzyme catalyses orotidine 5'-phosphate + H(+) = UMP + CO2. The protein operates within pyrimidine metabolism; UMP biosynthesis via de novo pathway; UMP from orotate: step 2/2. Catalyzes the decarboxylation of orotidine 5'-monophosphate (OMP) to uridine 5'-monophosphate (UMP). The protein is Orotidine 5'-phosphate decarboxylase of Pasteurella multocida (strain Pm70).